The primary structure comprises 1249 residues: DNA-directed RNA polymerase subunit beta (1249 aa).

The protein belongs to the RNA polymerase beta chain family. The RNAP catalytic core consists of 2 alpha, 1 beta, 1 beta' and 1 omega subunit. When a sigma factor is associated with the core the holoenzyme is formed, which can initiate transcription.

It catalyses the reaction RNA(n) + a ribonucleoside 5'-triphosphate = RNA(n+1) + diphosphate. In terms of biological role, DNA-dependent RNA polymerase catalyzes the transcription of DNA into RNA using the four ribonucleoside triphosphates as substrates. The polypeptide is DNA-directed RNA polymerase subunit beta (Clostridium botulinum (strain Eklund 17B / Type B)).